We begin with the raw amino-acid sequence, 462 residues long: 3-isopropylmalate dehydratase large subunit (462 aa).

3 residues coordinate [4Fe-4S] cluster: cysteine 337, cysteine 397, and cysteine 400.

This sequence belongs to the aconitase/IPM isomerase family. LeuC type 1 subfamily. As to quaternary structure, heterodimer of LeuC and LeuD. Requires [4Fe-4S] cluster as cofactor.

It carries out the reaction (2R,3S)-3-isopropylmalate = (2S)-2-isopropylmalate. It functions in the pathway amino-acid biosynthesis; L-leucine biosynthesis; L-leucine from 3-methyl-2-oxobutanoate: step 2/4. Functionally, catalyzes the isomerization between 2-isopropylmalate and 3-isopropylmalate, via the formation of 2-isopropylmaleate. The protein is 3-isopropylmalate dehydratase large subunit of Listeria innocua serovar 6a (strain ATCC BAA-680 / CLIP 11262).